We begin with the raw amino-acid sequence, 3838 residues long: MSGTFSRCMCTPAARVFWNAGQVFCTRCLSARPLLSPELQDTDLGVVGLFYKPKDKIHWKVPIGIPQVECTPSGCCWLSAVFPLARMTSGNHNFLQRLVKVADVLYRDGCLAPRHLRELQVYERGCSWYPITGPVPGMGLFANSMHVSDQPFPGATHVLTNSPLPQRACRQPFCPFEEAHSDVYRWKKFVIFTDSSPNGRFRMMWTPESDDSAALEVLPPELERQVEILTRSFPAHHPINLADWELTESPENGFSFGTSHSCGHIVQNPNVFDGKCWLTCFLGQSAEVCYHEEHLANALGYQTKWGVHGKYLQRRLQVRGMRAVVDPDGPIHVEALSCSQSWVRHLTLNNDVTPGFVRLTSIRIVSNTEPTAFRIFRFGAHKWYGAAGKRARAKRATKSGKDSALAPKIAPPVPTCGITTYSPPTDGSCGWHVLAAIVNRMINGDFTSPLPQYNRPEDDWASDYDLAQAIQCLQLPATVVRNRACPNAKYLIKLNGVHWEVEVRSGMAPRSLSRECVVGVCSEGCVAPPYPADGLPKRALEALASAYRLPSDCVSSGIADFLADPPPQEFWTLDKMLTSPSPERSGFSSLYKLLLEVVPQKCGATEGAFVYAVERMLKDCPSPEQAMALLAKIKVPSSKAPSVSLDECFPAGVPADFEPAFQERPRSPGAAVALCSPDAKGFEGTASEEAQESGHKAVHAVPLAEGPNNEQVQVVAGEQLELGGCGLAIGSAQSSSDSKRENMHNSREDEPLDLSHPAPAATTTLVGEQTPDNPGSDASALPIAVRGFVPTGPILRHVEHCGTESGDSSSPLDLSFAQTLDQPLDLSLAAWPVKATASDPGWVRGRCEPVFLKPRKAFSDGDSALQFGELSESSSVIEFDQTKDTLVADAPVDLTTSNEALSAVDPSEFVELRRPRHSAQALIDRGGPLADVHAKIKNRVYEQCLQACEPGSRATPATREWLDKMWDRVDMKTWRCTSQFQAGRILASLKFLPDMIQDTPPPVPRKNRASDNAGLKQLVARWDKKLSVTPPPKSAGLVLDQTVPPPTDIQQEDATPSDGLSHASDFSSRVSTSWSWKGLMLSGTRLAGSAGQRLMTWVFEVYSHLPAFILTLFSPRGSMAPGDWLFAGVVLLALLLCRSYPILGCLPLLGVFSGSLRRVRLGVFGSWMAFAVFLFSTPSNPVGSSCDHDSPECHAELLALEQRQLWEPVRGLVVGPSGLLCVILGKLLGGSRHLWHVILRLCMLTDLALSLVYVVSQGRCHKCWGKCIRTAPAEVALNVFPFSRATRNSLTSLCDRFQTPKGVDPVHLATGWRGCWRGESPIHQPHQKPIAYANLDEKKISAQTVVAVPYDPSQAIKCLKVLQAGGAIVDQPTPEVVRVSEIPFSAPFFPKVPVNPDCRIVVDSDTFVAAVRCGYSTAQLVLGRGNFAKLNQTPLRDSASTKTTGGASYTLAVAQVSVWTLVHFILGLWFTSPQVCGRGTADPWCSNPFSYPAYGPGVVCSSRLCVSADGVTLPLFSAVAQLSGREVGIFILVLVSLTALAHRLALKADMLVVFSAFCAYAWPMSSWLICFFPILLKWVTLHPLTMLWVHSFLVFCMPAAGILSLGITGLLWAVGRFTQVAGIITPYDIHQYTSGPRGAAAVATAPEGTYMAAVRRAALTGRTLIFTPSAVGSLLEGAFRTHKPCLNTVNVVGSSLGSGGVFTIDGRKTVVTAAHVLNGDTARVTGDSYNRMHTFKTSGDYAWSHADDWQGVAPVVKVAKGYRGRAYWQTSTGVEPGVIGEGFAFCFTNCGDSGSPVISESGDLIGIHTGSNKLGSGLVTTPEGETCAIKETKLSDLSRHFAGPSVPLGDIKLSPAIVPDVTSIPSDLASLLASVPVMEGGLSTVQLLCVFFLLWRMMGHAWTPIVAVGFFLLNEILPAVLVRAVFSFALFILAWATPWSAQVLMIRLLTASLNRNKLSLAFYALGGVVGLAAEIGAFAGRLPELSQALSTYCFLPRVLAMASYVPIIIIGGLHALGVILWLFKYRCLHNMLVGDGSFSSAFFLRYFAEGNLRKGVSQSCGMSNESLTAALACKLSQADLDFLSSLTNFKCFVSASNMKNAAGQYIEAAYAKALRQELASLVQVDKMKGILSKLEAFAETATPSLDAGDVVVLLGQHPHGSILDINVGTERKTVSVQETRSLGGSKFSVCTVVSNTPVDALTGIPLQTPTPLFENGPRHRGEEDDLRVERMKKHCVSLGFHNINGKVYCKIWDKSTGDTFYTDDSRYTQDLAFQDRSADYRDRDYEGVQTAPQQGFDPKSETPIGTVVIGGITYNRYLIKGKEVLVPKPDNCLEAAKLSLEQALAGMGQTCDLTAAEVEKLRRIISQLQGLTTEQALNCLLAASGLTRCGRGGLVVTETAVKIVKYHSRTFTLGPLDLKVTSEAEVKKSTEQGHAVVANLCSGVILMRPHPPSLVDVLLKPGLDTKPGIQPGHGAGNMGVDGSTWDFETAPTKAELELSKQIIQACEVRRGDAPNLQLPYKLYPVRGDPERHGGRLINTRFGDLSYKTPQDTKSAIHAACCLHPNGAPVSDGKSTLGTTLQHGFELYVPTVPYSVMEYLDSRPDTPFMCTKHGTSKAAAEDLQKYDLSTQGFVLPGVLRLVRRFIFGHIGKAPPLFLPSTYPAKNSMAGINGQRFPTKDVQSIPEIDEMCARAVKENWQTVTPCTLKKQYCSKPKTRTILGTNNFIALAHRSALSGVTQAFMKKAWKSPIALGKNKFKELHCTVAGRCLEADLASCDRSTPAIVRWFVANLLYELAGCEEYLPSYVLNCCHDLVATQDGAFTKRGGLSSGDPVTSVSNTVYSLIIYAQHMVLSALKMGHEIGLKFLEEQLKFEDLLEIQPMLVYSDDLVLYAERPTFPNYHWWVEHLDLMLGFRTDPKKTVITDKPSFLGCRIEAGRQLVPNRDRILAALAYHMKAQNASEYYASAAAILMDSCACIDHDPEWYEDLICGIARCARQDGYSFPGPAFFMSMWEKLRSHNEGKKFRHCGICDAKADHASACGLDLCLFHSHFHQHCPVTLSCGHHAGSRECSQCQSPVGAGRSPLDAVLKQIPYKPPRTVIMKVGNKTTALDPGRYQSRRGLVAVKRGIAGNEVDLPDGDYQVVPLLPTCKDINMVKVACNVLLSKFIVGPPGSGKTTWLLSQVQDDDVIYTPTHQTMFDIVSALKVCRYSIPGASGLPFPPPARSGPWVRLVASGHVPGRTSYLDEAGYCNHLDILRLLSKTPLVCLGDLQQLHPVGFDSYCYVFDQMPQKQLTTIYRFGPNICAAIQPCYREKLESKARNTRVVFTTWPVAFGQVLTPYHKDRIGSAITIDSSQGATFDIVTLHLPSPKSLNKSRALVAITRARHGLFIYDPHNQLQEFFNLIPERTDCNLVFSRGDDLVVLSADNAVTTVAKALGTGPSRFRVSDPRCKSLLAACSASLEGSCMPLPQVAHNLGFYFSPDSPAFAPLPKELAPHWPVVTHQNNRAWPDRLVASMRPIDARYSKPMVGAGYVVGPSTFLGTPGVVSYYLTLYIRGEPQALPETLVSTGRIATDCREYLDAAEEEAAKELPHAFIGDVKGTTVGGCHHITSKYLPRTLPKDSVAVVGVSSPGRAAKAMCTLTDVYLPELRPYLQPETASKCWKLKLDFRDVRLMVWKGATAYFQLEGLTWSALPDYARFIQLPKDAVVYIDPCIGPATANRKVVRTTDWRADLAVTPYDYGAQNILTTAWFEDLGPQWKILGLQPFRRAFGFENTEDWAILARRMSDGKDYTDYNWDCVRERPHAIYGRARDHTYHFAPGTELQVELGKPRLPPGREP.

The segment at 8–28 (CMCTPAARVFWNAGQVFCTRC) adopts a C4-type; atypical zinc-finger fold. A Peptidase C31 domain is found at 69–180 (ECTPSGCCWL…QPFCPFEEAH (112 aa)). The segment at 69-182 (ECTPSGCCWL…FCPFEEAHSD (114 aa)) is PCP1-alpha. Residues Cys76 and His146 each act as for Nsp1-alpha papain-like cysteine proteinase activity in the active site. The segment at 203–204 (MM) is important for host EIF2AK2 inhibition. Positions 269 to 384 (PNVFDGKCWL…IFRFGAHKWY (116 aa)) are PCP1-beta. The region spanning 269-385 (PNVFDGKCWL…FRFGAHKWYG (117 aa)) is the Peptidase C32 domain. Residues Cys276 and His345 each act as for Nsp1-beta papain-like cysteine proteinase activity in the active site. Positions 418 to 505 (ITTYSPPTDG…GVHWEVEVRS (88 aa)) are OTU-like. Residues 420–527 (TYSPPTDGSC…VGVCSEGCVA (108 aa)) enclose the Peptidase C33 domain. Active-site for Nsp2 cysteine proteinase activity residues include Cys429 and His498. 2 disordered regions span residues 728-758 (AIGS…SHPA) and 1027-1064 (SVTP…SHAS). The segment covering 737-749 (DSKRENMHNSRED) has biased composition (basic and acidic residues). A run of 5 helical transmembrane segments spans residues 1094–1114 (LMTW…TLFS), 1117–1137 (GSMA…LLLC), 1162–1182 (GVFG…SNPV), 1211–1231 (GLVV…LGGS), and 1235–1255 (WHVI…VYVV). The segment at 1132–1255 (LALLLCRSYP…DLALSLVYVV (124 aa)) is HD1. Residues 1310–1334 (TGWRGCWRGESPIHQPHQKPIAYAN) are WCCH. The next 4 membrane-spanning stretches (helical) occupy residues 1450-1470 (TLAV…GLWF), 1526-1546 (EVGI…RLAL), 1556-1576 (AFCA…PILL), and 1592-1612 (FLVF…GLLW). The interval 1451 to 1612 (LAVAQVSVWT…LSLGITGLLW (162 aa)) is HD2. The 203-residue stretch at 1677–1879 (GAFRTHKPCL…SLLASVPVME (203 aa)) folds into the Peptidase S32 domain. Catalysis depends on charge relay system; for 3C-like serine proteinase activity residues His1715, Asp1740, and Ser1793. A run of 5 helical transmembrane segments spans residues 1875-1895 (VPVM…FLLW), 1916-1936 (ILPA…LAWA), 1960-1980 (LAFY…AFAG), 2003-2023 (SYVP…LWLF), and 2029-2048 (HNML…RYFA). Residues 1902-2023 (WTPIVAVGFF…HALGVILWLF (122 aa)) are HD3. A NiRAN domain is found at 2364 to 2527 (IISQLQGLTT…LPYKLYPVRG (164 aa)). In terms of domain architecture, RdRp catalytic spans 2765 to 2899 (AGRCLEADLA…LYAERPTFPN (135 aa)). Positions 3021–3084 (GKKFRHCGIC…SPVGAGRSPL (64 aa)) constitute an AV ZBD domain. Residues Cys3027, Cys3030, Cys3040, Cys3045, His3048, His3050, His3052, His3054, Cys3061, His3063, Cys3070, and Cys3073 each coordinate Zn(2+). The region spanning 3134–3293 (DLPDGDYQVV…VFDQMPQKQL (160 aa)) is the (+)RNA virus helicase ATP-binding domain. Residue 3168–3175 (VGPPGSGK) participates in ATP binding. Residues 3294-3423 (TTIYRFGPNI…FSRGDDLVVL (130 aa)) form the (+)RNA virus helicase C-terminal domain. In terms of domain architecture, AV-Nsp11N/CoV-Nsp15M spans 3462–3559 (EGSCMPLPQV…LTLYIRGEPQ (98 aa)). Positions 3561–3683 (LPETLVSTGR…MVWKGATAYF (123 aa)) constitute a NendoU domain. Catalysis depends on residues His3592, His3607, and Lys3636.

The protein belongs to the arteriviridae polyprotein family. In terms of assembly, nsp1-alpha papain-like: Interacts with host RNF31. Interacts with host EIF2AK2; this interaction occurs in host stress granules and leads to EIF2AK2 inhibition. Interacts with host G3BP1; this interaction probably plays a role in Nsp1-beta-mediated inhibition of host EIF2AK2. As to quaternary structure, interacts with host DDX18; this interaction redistributes host DDX18 to the cytoplasm. In terms of assembly, interacts with host IFITM1. Interacts with host DDX5. As to quaternary structure, interacts with host OTULIN. In terms of assembly, interacts with host LGALS3. In terms of processing, specific enzymatic cleavages in vivo by its own proteases yield mature proteins. Nsp1 is autocleaved into two subunits, Nsp1-alpha and Nsp1-beta. There are two alternative pathways for processing. Either nsp4-5 is cleaved, which represents the major pathway or the nsp5-6 and nsp6-7 are processed, which represents the minor pathway. The major pathway occurs when nsp2 acts as a cofactor for nsp4.

The protein resides in the host nucleus. Its subcellular location is the host cytoplasm. The protein localises to the host membrane. It localises to the host endoplasmic reticulum. It is found in the host perinuclear region. The enzyme catalyses RNA(n) + a ribonucleoside 5'-triphosphate = RNA(n+1) + diphosphate. The catalysed reaction is ATP + H2O = ADP + phosphate + H(+). It catalyses the reaction Thiol-dependent hydrolysis of ester, thioester, amide, peptide and isopeptide bonds formed by the C-terminal Gly of ubiquitin (a 76-residue protein attached to proteins as an intracellular targeting signal).. It carries out the reaction uridylyl-uridylyl-ribonucleotide-RNA = a 3'-end uridylyl-2',3'-cyclophospho-uridine-RNA + a 5'-end dephospho-ribonucleoside-RNA. Functionally, contains the activities necessary for the transcription of negative stranded RNA, leader RNA, subgenomic mRNAs and progeny virion RNA as well as proteinases responsible for the cleavage of the polyprotein into functional products. Inhibits host IFN-beta production. Plays a role in the degradation of the host transcriptional activator CREBBP protein. The degradation of host CREBBP which is a key component of the IFN enhanceosome is likely responsible for the inhibition of interferon mediated by Nsp1-alpha. Also participates in the inhibition of host NF-kappa-B activation by counteracting LUBAC-dependent induction of NF-kappa-B. Reduces host NEMO ubiquitination by blocking the interaction between the two LUBAC complex components RNF31 and SHARPIN. In terms of biological role, plays a role in blocking host mRNA nuclear export to the cytoplasm and subversion of host protein synthesis. Additionally, inhibits the interferon-activated JAK/STAT signal transduction by mediating the ubiquitination and subsequent proteasomal degradation of host KPNA1. Repurposes the host antiviral stress granules into a proviral platform to counteract the EIF2AK2/PKR restriction, thereby regulating the host inflammatory response. Its function is as follows. Multifunctional protein that acts as a viral protease and as a viral antagonist of host immune response. Cleaves the nsp2/nsp3 site in the viral polyprotein. Displays deubiquitinating activity that cleaves both ubiquitinated and ISGylated products and therefore inhibits ubiquitin and ISG15-dependent host innate immunity. Also deubiquinates host NFKBIA, thereby interfering with NFKBIA degradation and impairing subsequent NF-kappa-B activation. Functionally, plays a role in the inhibition of the immune response by interacting with host IFITM1. This interaction leads to the proteasomal degradation of the IFN-induced antiviral protein IFITM1. Cleaves the majority of cleavage sites present in the C-terminus of the polyprotein. Triggers host apoptosis through caspase-3, -8, and -9 activations. Subverts host innate immune responses through its protease activity. Targets the NF-kappa-B essential modulator NEMO and mediates its cleavage. Blocks host interferon beta induction and downstream signaling by cleaving mitochondrial MAVS, dislodging it from the mitochondria. Impairs host defense by cleaving host mRNA-decapping enzyme DCP1A to attenuate its antiviral activity. In terms of biological role, plays a role in the initial induction of autophagosomes from host endoplasmic reticulum. Its function is as follows. Plays a role in the inhibition of host STAT3 signaling pathway by inducing the degradation of STAT3. Functionally, responsible for replication and transcription of the viral RNA genome. Displays RNA and DNA duplex-unwinding activities with 5' to 3' polarity. In terms of biological role, plays a role in viral transcription/replication and prevents the simultaneous activation of host cell dsRNA sensors, such as MDA5/IFIH1, OAS, PKR and NLRP3 inflammasome. Acts by degrading the 5'-polyuridines generated during replication of the poly(A) region of viral genomic and subgenomic RNAs. Catalyzes a two-step reaction in which a 2'3'-cyclic phosphate (2'3'-cP) is first generated by 2'-O transesterification, which is then hydrolyzed to a 3'-phosphate (3'-P). If not degraded, poly(U) RNA would hybridize with poly(A) RNA tails and activate host dsRNA sensors. Also plays a role in the inhibition of host type I interferon production by recruiting host OTULIN to promote removal of linear ubiquitination targeting host NEMO. This Sus scrofa (Pig) protein is Replicase polyprotein 1ab.